The following is a 332-amino-acid chain: Glycerol-3-phosphate dehydrogenase [NAD(P)+] (332 aa).

Residues Ser11, Trp12, Arg32, Arg33, and Lys106 each contribute to the NADPH site. Sn-glycerol 3-phosphate is bound by residues Lys106 and Gly136. Position 140 (Ala140) interacts with NADPH. 5 residues coordinate sn-glycerol 3-phosphate: Lys191, Asp244, Ser254, Arg255, and Asn256. Lys191 acts as the Proton acceptor in catalysis. Arg255 is a binding site for NADPH. Residues Val280 and Glu282 each coordinate NADPH.

The protein belongs to the NAD-dependent glycerol-3-phosphate dehydrogenase family.

It localises to the cytoplasm. The enzyme catalyses sn-glycerol 3-phosphate + NAD(+) = dihydroxyacetone phosphate + NADH + H(+). It carries out the reaction sn-glycerol 3-phosphate + NADP(+) = dihydroxyacetone phosphate + NADPH + H(+). The protein operates within membrane lipid metabolism; glycerophospholipid metabolism. Functionally, catalyzes the reduction of the glycolytic intermediate dihydroxyacetone phosphate (DHAP) to sn-glycerol 3-phosphate (G3P), the key precursor for phospholipid synthesis. In Corynebacterium aurimucosum (strain ATCC 700975 / DSM 44827 / CIP 107346 / CN-1) (Corynebacterium nigricans), this protein is Glycerol-3-phosphate dehydrogenase [NAD(P)+].